The following is a 324-amino-acid chain: Glyoxylate/hydroxypyruvate reductase B (324 aa).

Residues R237 and E266 contribute to the active site. Catalysis depends on H285, which acts as the Proton donor.

This sequence belongs to the D-isomer specific 2-hydroxyacid dehydrogenase family. GhrB subfamily. As to quaternary structure, homodimer.

It is found in the cytoplasm. It catalyses the reaction glycolate + NADP(+) = glyoxylate + NADPH + H(+). It carries out the reaction (R)-glycerate + NAD(+) = 3-hydroxypyruvate + NADH + H(+). The catalysed reaction is (R)-glycerate + NADP(+) = 3-hydroxypyruvate + NADPH + H(+). Catalyzes the NADPH-dependent reduction of glyoxylate and hydroxypyruvate into glycolate and glycerate, respectively. In Salmonella paratyphi B (strain ATCC BAA-1250 / SPB7), this protein is Glyoxylate/hydroxypyruvate reductase B.